The chain runs to 440 residues: L-seryl-tRNA(Sec) selenium transferase (440 aa).

N6-(pyridoxal phosphate)lysine is present on Lys-282.

It belongs to the SelA family. The cofactor is pyridoxal 5'-phosphate.

The protein localises to the cytoplasm. The catalysed reaction is L-seryl-tRNA(Sec) + selenophosphate + H(+) = L-selenocysteinyl-tRNA(Sec) + phosphate. The protein operates within aminoacyl-tRNA biosynthesis; selenocysteinyl-tRNA(Sec) biosynthesis; selenocysteinyl-tRNA(Sec) from L-seryl-tRNA(Sec) (bacterial route): step 1/1. Its function is as follows. Converts seryl-tRNA(Sec) to selenocysteinyl-tRNA(Sec) required for selenoprotein biosynthesis. The protein is L-seryl-tRNA(Sec) selenium transferase of Campylobacter jejuni subsp. jejuni serotype O:6 (strain 81116 / NCTC 11828).